We begin with the raw amino-acid sequence, 60 residues long: Large ribosomal subunit protein uL30 (60 aa).

This sequence belongs to the universal ribosomal protein uL30 family. Part of the 50S ribosomal subunit.

The protein is Large ribosomal subunit protein uL30 of Dehalococcoides mccartyi (strain ATCC BAA-2266 / KCTC 15142 / 195) (Dehalococcoides ethenogenes (strain 195)).